The sequence spans 222 residues: MAETALPTRAEVAARIDHTLLAPEATDDDVAALVAEARDLGVYAVCVSPSMLPVRAPGLVVATVAGFPSGKHHSLVKGAEARLAVDQGAAEVDMVIDVGAARAGEYSAVLADIVTVREAISDRAVLKVIIESAALSDEAIVEVCRVAERAGADFVKTSTGFHPAGGASVHAVRLMAETVGGRLGIKASGGIRTAAAAAELLAAGATRLGLSKSAAVLDGFPS.

The Proton donor/acceptor role is filled by Asp-93. Lys-156 serves as the catalytic Schiff-base intermediate with acetaldehyde. Lys-186 (proton donor/acceptor) is an active-site residue.

The protein belongs to the DeoC/FbaB aldolase family. DeoC type 1 subfamily.

Its subcellular location is the cytoplasm. The catalysed reaction is 2-deoxy-D-ribose 5-phosphate = D-glyceraldehyde 3-phosphate + acetaldehyde. Its pathway is carbohydrate degradation; 2-deoxy-D-ribose 1-phosphate degradation; D-glyceraldehyde 3-phosphate and acetaldehyde from 2-deoxy-alpha-D-ribose 1-phosphate: step 2/2. Functionally, catalyzes a reversible aldol reaction between acetaldehyde and D-glyceraldehyde 3-phosphate to generate 2-deoxy-D-ribose 5-phosphate. This chain is Deoxyribose-phosphate aldolase, found in Nocardia farcinica (strain IFM 10152).